Consider the following 371-residue polypeptide: uncharacterized protein (371 aa).

The protein to A.pernix APE_1804 and S.solfataricus SSO2105.

This is an uncharacterized protein from Aeropyrum pernix (strain ATCC 700893 / DSM 11879 / JCM 9820 / NBRC 100138 / K1).